A 154-amino-acid polypeptide reads, in one-letter code: MKKDEVKVVVIGSSDVGKTTLMENLIDKIGKVEYKGITTAIDYGSLTIKDKKIHFFGTPGQKRFEFMRELALKGTNFALVVLDASKGITKEDEEIIKLLESKKIPYGIFINKTDVGDIDTSEVYNFCNPKFIVKGCAVKKDGLDELINKIMSHT.

12–19 (GSSDVGKT) is a binding site for GTP. Residues 17 to 112 (GKTTLMENLI…KIPYGIFINK (96 aa)) form the G domain.

The protein to M.thermoautotrophicum MTH765.

This is an uncharacterized protein from Methanocaldococcus jannaschii (strain ATCC 43067 / DSM 2661 / JAL-1 / JCM 10045 / NBRC 100440) (Methanococcus jannaschii).